Consider the following 621-residue polypeptide: Phosphomethylpyrimidine synthase (621 aa).

The span at Met-1–Pro-23 shows a compositional bias: low complexity. Positions Met-1–Tyr-29 are disordered. Substrate-binding positions include Asn-215, Met-244, Tyr-273, His-309, Ser-329–Gly-331, Asp-370–Arg-373, and Glu-409. His-413 is a binding site for Zn(2+). Substrate is bound at residue Tyr-436. His-477 is a binding site for Zn(2+). [4Fe-4S] cluster is bound by residues Cys-557, Cys-560, and Cys-565.

Belongs to the ThiC family. In terms of assembly, homodimer. Requires [4Fe-4S] cluster as cofactor.

It catalyses the reaction 5-amino-1-(5-phospho-beta-D-ribosyl)imidazole + S-adenosyl-L-methionine = 4-amino-2-methyl-5-(phosphooxymethyl)pyrimidine + CO + 5'-deoxyadenosine + formate + L-methionine + 3 H(+). It participates in cofactor biosynthesis; thiamine diphosphate biosynthesis. Its function is as follows. Catalyzes the synthesis of the hydroxymethylpyrimidine phosphate (HMP-P) moiety of thiamine from aminoimidazole ribotide (AIR) in a radical S-adenosyl-L-methionine (SAM)-dependent reaction. This Rhodospirillum rubrum (strain ATCC 11170 / ATH 1.1.1 / DSM 467 / LMG 4362 / NCIMB 8255 / S1) protein is Phosphomethylpyrimidine synthase.